The sequence spans 178 residues: Ribosome maturation factor RimM (178 aa).

Residues 101 to 178 (DGEYYWYQLQ…EMQVDWDADF (78 aa)) form the PRC barrel domain.

The protein belongs to the RimM family. In terms of assembly, binds ribosomal protein uS19.

The protein localises to the cytoplasm. Its function is as follows. An accessory protein needed during the final step in the assembly of 30S ribosomal subunit, possibly for assembly of the head region. Essential for efficient processing of 16S rRNA. May be needed both before and after RbfA during the maturation of 16S rRNA. It has affinity for free ribosomal 30S subunits but not for 70S ribosomes. The protein is Ribosome maturation factor RimM of Stutzerimonas stutzeri (strain A1501) (Pseudomonas stutzeri).